Reading from the N-terminus, the 932-residue chain is DNA mismatch repair protein MutS (932 aa).

Position 615–622 (615–622 (GPNMAGKS)) interacts with ATP.

It belongs to the DNA mismatch repair MutS family.

Functionally, this protein is involved in the repair of mismatches in DNA. It is possible that it carries out the mismatch recognition step. This protein has a weak ATPase activity. This chain is DNA mismatch repair protein MutS, found in Clostridium botulinum (strain Okra / Type B1).